The following is a 581-amino-acid chain: Threonine--tRNA ligase (581 aa).

Positions 185–478 (DHRKLGKELD…LIEHYGGAFP (294 aa)) are catalytic. Zn(2+) is bound by residues C278, H329, and H455.

Belongs to the class-II aminoacyl-tRNA synthetase family. Homodimer. Zn(2+) is required as a cofactor.

It localises to the cytoplasm. The enzyme catalyses tRNA(Thr) + L-threonine + ATP = L-threonyl-tRNA(Thr) + AMP + diphosphate + H(+). In terms of biological role, catalyzes the attachment of threonine to tRNA(Thr) in a two-step reaction: L-threonine is first activated by ATP to form Thr-AMP and then transferred to the acceptor end of tRNA(Thr). Also edits incorrectly charged L-seryl-tRNA(Thr). This Borreliella afzelii (strain PKo) (Borrelia afzelii) protein is Threonine--tRNA ligase.